The following is a 324-amino-acid chain: UDP-N-acetylenolpyruvoylglucosamine reductase (324 aa).

The 194-residue stretch at 38-231 folds into the FAD-binding PCMH-type domain; the sequence is AGGSARRLYV…SRERIRSLLK (194 aa). Residue Arg-195 is part of the active site. Catalysis depends on Ser-246, which acts as the Proton donor. Residue Glu-316 is part of the active site.

The protein belongs to the MurB family. FAD is required as a cofactor.

It is found in the cytoplasm. It carries out the reaction UDP-N-acetyl-alpha-D-muramate + NADP(+) = UDP-N-acetyl-3-O-(1-carboxyvinyl)-alpha-D-glucosamine + NADPH + H(+). It participates in cell wall biogenesis; peptidoglycan biosynthesis. Cell wall formation. This is UDP-N-acetylenolpyruvoylglucosamine reductase from Thiobacillus denitrificans (strain ATCC 25259 / T1).